Here is a 103-residue protein sequence, read N- to C-terminus: Small ribosomal subunit protein uS10 (103 aa).

This sequence belongs to the universal ribosomal protein uS10 family. In terms of assembly, part of the 30S ribosomal subunit.

Involved in the binding of tRNA to the ribosomes. The sequence is that of Small ribosomal subunit protein uS10 from Psychrobacter arcticus (strain DSM 17307 / VKM B-2377 / 273-4).